We begin with the raw amino-acid sequence, 88 residues long: Small ribosomal subunit protein uS19 (88 aa).

The protein belongs to the universal ribosomal protein uS19 family.

Its function is as follows. Protein S19 forms a complex with S13 that binds strongly to the 16S ribosomal RNA. In Carsonella ruddii (strain PV), this protein is Small ribosomal subunit protein uS19.